The chain runs to 150 residues: Ribonuclease pancreatic delta-type (150 aa).

The N-terminal stretch at 1–25 (MGLEKSFILFSLLVLVLGWVQPSLG) is a signal peptide. Arg-35 is a binding site for substrate. The active-site Proton acceptor is the His-37. Cystine bridges form between Cys-51-Cys-110, Cys-65-Cys-121, and Cys-83-Cys-136. Substrate is bound by residues 66 to 70 (KRVNT), Lys-91, and Arg-111. His-145 serves as the catalytic Proton donor.

The protein belongs to the pancreatic ribonuclease family. In terms of assembly, monomer.

The protein localises to the secreted. The catalysed reaction is an [RNA] containing cytidine + H2O = an [RNA]-3'-cytidine-3'-phosphate + a 5'-hydroxy-ribonucleotide-3'-[RNA].. It carries out the reaction an [RNA] containing uridine + H2O = an [RNA]-3'-uridine-3'-phosphate + a 5'-hydroxy-ribonucleotide-3'-[RNA].. In terms of biological role, endonuclease that catalyzes the cleavage of RNA on the 3' side of pyrimidine nucleotides. Acts on single-stranded and double-stranded RNA. The polypeptide is Ribonuclease pancreatic delta-type (Rattus rattus (Black rat)).